Consider the following 882-residue polypeptide: Alanine--tRNA ligase (882 aa).

The Zn(2+) site is built by histidine 570, histidine 574, cysteine 672, and histidine 676.

It belongs to the class-II aminoacyl-tRNA synthetase family. The cofactor is Zn(2+).

It is found in the cytoplasm. It carries out the reaction tRNA(Ala) + L-alanine + ATP = L-alanyl-tRNA(Ala) + AMP + diphosphate. Catalyzes the attachment of alanine to tRNA(Ala) in a two-step reaction: alanine is first activated by ATP to form Ala-AMP and then transferred to the acceptor end of tRNA(Ala). Also edits incorrectly charged Ser-tRNA(Ala) and Gly-tRNA(Ala) via its editing domain. This is Alanine--tRNA ligase from Xanthomonas campestris pv. campestris (strain 8004).